Consider the following 158-residue polypeptide: Transcriptional repressor NrdR (158 aa).

Residues 3-34 fold into a zinc finger; it reads CPFCNSEETRVIDTRLTDDGHVVRRRRECEHC. An ATP-cone domain is found at 49–139; sequence IFVVKKGGQR…VYKEFRDLDH (91 aa).

The protein belongs to the NrdR family. Zn(2+) is required as a cofactor.

Negatively regulates transcription of bacterial ribonucleotide reductase nrd genes and operons by binding to NrdR-boxes. This Kosmotoga olearia (strain ATCC BAA-1733 / DSM 21960 / TBF 19.5.1) protein is Transcriptional repressor NrdR.